Consider the following 401-residue polypeptide: O-methyltransferase SAT18 (401 aa).

S-adenosyl-L-methionine is bound at residue D249. The Proton acceptor role is filled by H300.

Belongs to the class I-like SAM-binding methyltransferase superfamily. Cation-independent O-methyltransferase family.

Its pathway is mycotoxin biosynthesis. Its function is as follows. O-methyltransferase; part of the satratoxin SC3 cluster involved in the biosynthesis of satratoxins, trichothecene mycotoxins that are associated with human food poisonings. Satratoxins are suggested to be made by products of multiple gene clusters (SC1, SC2 and SC3) that encode 21 proteins in all, including polyketide synthases, acetyltransferases, and other enzymes expected to modify the trichothecene skeleton. SC1 encodes 10 proteins, SAT1 to SAT10. The largest are SAT8, which encodes a putative polyketide synthase (PKS) with a conventional non-reducing architecture, and SAT10, a putative protein containing four ankyrin repeats and thus may be involved in protein scaffolding. The putative short-chain reductase SAT3 may assist the PKS in some capacity. SAT6 contains a secretory lipase domain and acts probably as a trichothecene esterase. SAT5 encodes a putative acetyltransferase, and so, with SAT6, may affect endogenous protection from toxicity. The probable transcription factor SAT9 may regulate the expression of the SC1 cluster. SC2 encodes proteins SAT11 to SAT16, the largest of which encodes the putative reducing PKS SAT13. SAT11 is a cytochrome P450 monooxygenase, while SAT14 and SAT16 are probable acetyltransferases. The SC2 cluster may be regulated by the transcription factor SAT15. SC3 is a small cluster that encodes 5 proteins, SAT17 to SAT21. SAT21 is a putative MFS-type transporter which may have a role in exporting secondary metabolites. The four other proteins putatively encoded in SC3 include the taurine hydroxylase-like protein SAT17, the O-methyltransferase SAT18, the acetyltransferase SAT19, and the Cys6-type zinc finger SAT20, the latter being probably involved in regulation of SC3 expression. The polypeptide is O-methyltransferase SAT18 (Stachybotrys chartarum (strain CBS 109288 / IBT 7711) (Toxic black mold)).